A 1224-amino-acid polypeptide reads, in one-letter code: Tyrosine-protein kinase abl-1 (1224 aa).

The SH3 domain maps to 115–188 (SSAPLFVALY…PSNFIAPYNS (74 aa)). The 91-residue stretch at 194–284 (WYHGKISRSD…GLICLLMYPA (91 aa)) folds into the SH2 domain. The Protein kinase domain maps to 311–562 (IIMHNKLGGG…PRFRDIHFNL (252 aa)). ATP contacts are provided by residues 317 to 325 (LGGGQYGDV), lysine 340, and 385 to 391 (EFMCNGN). Aspartate 432 functions as the Proton acceptor in the catalytic mechanism. The Kinase activation loop motif lies at 450 to 474 (DFGLARFMKEDTYTAHAGAKFPIKW). The span at 579–620 (LKKNNDKKLESDKRRSNVRERSDSKSRHSSHHDRDRDRESLH) shows a compositional bias: basic and acidic residues. Disordered regions lie at residues 579–671 (LKKN…NTKP), 736–775 (KEST…STYV), 796–881 (KRSE…DVGM), 914–937 (LRHV…ATDN), and 968–1016 (RPFS…RSNG). Composition is skewed to polar residues over residues 639–655 (SVSF…TSFR) and 746–760 (AGSS…NDSL). Basic and acidic residues-rich tracts occupy residues 797–819 (RSET…KSEK) and 864–877 (PDSK…ETTK). Residues 973 to 984 (QCPNNSTSSAIS) show a composition bias toward polar residues. Positions 1001 to 1016 (YEERMKPELPRKRSNG) are enriched in basic and acidic residues.

It belongs to the protein kinase superfamily. Tyr protein kinase family. ABL subfamily. In terms of assembly, interacts (via SH2 and SH3 domains) with mig-13; the interaction is direct. May interact with soem-1.

Its subcellular location is the cell membrane. The protein localises to the cytoplasm. The catalysed reaction is L-tyrosyl-[protein] + ATP = O-phospho-L-tyrosyl-[protein] + ADP + H(+). Functionally, functions downstream of migratory protein mig-13 and is involved in Q neuroblast migration during larval development. Recruited by mig-13 to the leading edge of Q neuroblasts and their descendents to signal downstream, likely to the wve-1 pathway, and direct migration along the anteroposterior body axis. Promotes germline cell apoptosis in response to oxidative, osmotic and heat shock stresses. The chain is Tyrosine-protein kinase abl-1 (abl-1) from Caenorhabditis elegans.